Here is a 108-residue protein sequence, read N- to C-terminus: MPKPGILKSKSMFCVIYRSSKRDQTYLYVEKKDDFSRVPEELMKGFGQPQLAMILPLDGRKKLVNADIEKVKQALTEQGYYLQLPPPPEDLLKQHLSVMGQKTDDINK.

The YcgL domain maps to 12 to 96; sequence MFCVIYRSSK…PPEDLLKQHL (85 aa).

The polypeptide is Protein YcgL (Escherichia coli O127:H6 (strain E2348/69 / EPEC)).